We begin with the raw amino-acid sequence, 174 residues long: Pectinesterase inhibitor 12 (174 aa).

The N-terminal stretch at 1 to 20 (MKFLVSLVIFSLFLNGFATA) is a signal peptide. 2 disulfide bridges follow: Cys-28/Cys-43 and Cys-100/Cys-140. The N-linked (GlcNAc...) asparagine glycan is linked to Asn-129.

Belongs to the PMEI family.

The protein resides in the secreted. It is found in the extracellular space. Its subcellular location is the apoplast. Functionally, pectin methylesterase (PME) inhibitor involved in the maintenance of cell wall integrity in response to necrotrophic pathogens. Modulates PME activity and pectin methylesterification during infection by Botrytis cinerea and contributes to resistance against the pathogen. The protein is Pectinesterase inhibitor 12 of Arabidopsis thaliana (Mouse-ear cress).